Consider the following 957-residue polypeptide: Glycine dehydrogenase (decarboxylating) (957 aa).

At Lys-708 the chain carries N6-(pyridoxal phosphate)lysine.

This sequence belongs to the GcvP family. In terms of assembly, the glycine cleavage system is composed of four proteins: P, T, L and H. Requires pyridoxal 5'-phosphate as cofactor.

It carries out the reaction N(6)-[(R)-lipoyl]-L-lysyl-[glycine-cleavage complex H protein] + glycine + H(+) = N(6)-[(R)-S(8)-aminomethyldihydrolipoyl]-L-lysyl-[glycine-cleavage complex H protein] + CO2. Functionally, the glycine cleavage system catalyzes the degradation of glycine. The P protein binds the alpha-amino group of glycine through its pyridoxal phosphate cofactor; CO(2) is released and the remaining methylamine moiety is then transferred to the lipoamide cofactor of the H protein. The sequence is that of Glycine dehydrogenase (decarboxylating) from Escherichia coli O81 (strain ED1a).